A 222-amino-acid chain; its full sequence is uncharacterized protein (222 aa).

Residues N4, N75, N84, N104, N170, and N175 are each glycosylated (N-linked (GlcNAc...) asparagine; by host). Residues 200–220 traverse the membrane as a helical segment; that stretch reads LIIIIGIVIILLLIIVMIKTV.

It is found in the membrane. This is an uncharacterized protein from Acanthamoeba polyphaga (Amoeba).